The chain runs to 113 residues: Large ribosomal subunit protein P1 (113 aa).

The span at 56-66 (TAAAAPAPAAG) shows a compositional bias: low complexity. Residues 56–113 (TAAAAPAPAAGGSAGGEVEAADDDDEEDAEEEAADEGGDDDGDDDEEADGEGLGALFG) form a disordered region. Acidic residues predominate over residues 74-105 (EAADDDDEEDAEEEAADEGGDDDGDDDEEADG).

The protein belongs to the eukaryotic ribosomal protein P1/P2 family. In terms of assembly, part of the 50S ribosomal subunit. Homodimer, it forms part of the ribosomal stalk which helps the ribosome interact with GTP-bound translation factors. Forms a heptameric uL10/P0(P1)2(P1)2(P1)2 complex, where uL10/P0 forms an elongated spine to which the P1 dimers bind in a sequential fashion.

Functionally, forms part of the ribosomal stalk, playing a central role in the interaction of the ribosome with GTP-bound translation factors. This is Large ribosomal subunit protein P1 from Haloferax volcanii (strain ATCC 29605 / DSM 3757 / JCM 8879 / NBRC 14742 / NCIMB 2012 / VKM B-1768 / DS2) (Halobacterium volcanii).